Reading from the N-terminus, the 604-residue chain is Linalool synthase Tps-5073L4, chloroplastic (604 aa).

A chloroplast-targeting transit peptide spans 1 to 36; sequence MSSMRIYVAIMKKPSVKHVDYVDKKASKPSWRVSSS. 5 residues coordinate (2E)-geranyl diphosphate: R323, D360, D364, R501, and D504. Mg(2+) is bound by residues D360 and D364. The DDXXD motif motif lies at 360 to 364; that stretch reads DDVYD. The Mg(2+) site is built by D504, T508, and E512.

It belongs to the terpene synthase family. Tpsb subfamily. Monomer. Mg(2+) serves as cofactor. It depends on Mn(2+) as a cofactor.

It is found in the plastid. The protein resides in the chloroplast. The catalysed reaction is (2E)-geranyl diphosphate + H2O = linalool + diphosphate. It participates in secondary metabolite biosynthesis; terpenoid biosynthesis. In terms of biological role, monoterpene synthase (mono-TPS) involved in the biosynthesis of monoterpenes natural products. Catalyzes the conversion of (2E)-geranyl diphosphate (GPP) into linalool. This is Linalool synthase Tps-5073L4, chloroplastic from Perilla frutescens (Beefsteak mint).